The following is a 166-amino-acid chain: Protein C2-DOMAIN ABA-RELATED 11 (166 aa).

Residue methionine 1 is modified to N-acetylmethionine. The C2 domain maps to 1 to 103; that stretch reads MGEPLGLLQV…ISVARLRHVV (103 aa). N-acetylglycine; in Protein C2-DOMAIN ABA-RELATED 11, N-terminally processed is present on glycine 2. The Ca(2+) site is built by arginine 21, aspartate 22, aspartate 27, aspartate 73, lysine 74, aspartate 75, and aspartate 81.

It belongs to the plant CAR protein family. In terms of assembly, binds to PYR/PYL/RCAR abscisic acid intracellular receptors in an ABA-independent manner, both at the plasma membrane and in the nucleus.

It localises to the cell membrane. The protein resides in the nucleus. Its function is as follows. Stimulates the GTPase/ATPase activities of Obg-like ATPases. Mediates the transient calcium-dependent interaction of PYR/PYL/RCAR abscisic acid (ABA) receptors with the plasma membrane and thus regulates ABA sensitivity. The polypeptide is Protein C2-DOMAIN ABA-RELATED 11 (Arabidopsis thaliana (Mouse-ear cress)).